The sequence spans 362 residues: 3-dehydroquinate synthase (362 aa).

NAD(+)-binding positions include 71 to 76 (DGEQYK), 105 to 109 (GVVGD), 129 to 130 (TT), K142, K151, and 169 to 172 (CLKT). 3 residues coordinate Zn(2+): E184, H247, and H264.

It belongs to the sugar phosphate cyclases superfamily. Dehydroquinate synthase family. Requires Co(2+) as cofactor. The cofactor is Zn(2+). NAD(+) serves as cofactor.

Its subcellular location is the cytoplasm. The catalysed reaction is 7-phospho-2-dehydro-3-deoxy-D-arabino-heptonate = 3-dehydroquinate + phosphate. Its pathway is metabolic intermediate biosynthesis; chorismate biosynthesis; chorismate from D-erythrose 4-phosphate and phosphoenolpyruvate: step 2/7. Its function is as follows. Catalyzes the conversion of 3-deoxy-D-arabino-heptulosonate 7-phosphate (DAHP) to dehydroquinate (DHQ). This Escherichia coli O127:H6 (strain E2348/69 / EPEC) protein is 3-dehydroquinate synthase.